Reading from the N-terminus, the 344-residue chain is Fructose-1,6-bisphosphatase, cytosolic (344 aa).

Mg(2+)-binding residues include glutamate 71, glutamate 100, aspartate 121, leucine 123, and aspartate 124. Substrate is bound by residues 124 to 127, asparagine 215, tyrosine 247, tyrosine 267, and lysine 277; that span reads DGSS. Glutamate 283 is a binding site for Mg(2+).

This sequence belongs to the FBPase class 1 family. The cofactor is Mg(2+).

Its subcellular location is the cytoplasm. It carries out the reaction beta-D-fructose 1,6-bisphosphate + H2O = beta-D-fructose 6-phosphate + phosphate. This chain is Fructose-1,6-bisphosphatase, cytosolic, found in Oryza coarctata (Wild rice).